Consider the following 438-residue polypeptide: Cell division cycle-associated 7-like protein (438 aa).

Residues 9 to 33 (IPKEVADIFSAPSDDEEFVGFQDDV) carry the Integrase domain-binding motif 1 (IBM1) motif. Residue S21 is modified to Phosphoserine. Positions 56–115 (VCFRSKYFTEELRRIFKEDTDSEMEDFEGFTESELNMSSNPELMESELSDSDKAYPVMND) are PSIP1-binding. The Integrase domain-binding motif 2 (IBM2) signature appears at 63-89 (FTEELRRIFKEDTDSEMEDFEGFTESE). The segment at 74–199 (DTDSEMEDFE…ESRAESQENS (126 aa)) is disordered. Residue T75 is modified to Phosphothreonine. Positions 75-86 (TDSEMEDFEGFT) are enriched in acidic residues. Residue S77 is modified to Phosphoserine. T86 carries the phosphothreonine modification. Residues S101, S104, S135, S136, and S159 each carry the phosphoserine modification. A compositionally biased stretch (basic and acidic residues) spans 152 to 167 (RTPDKDSSHLLDSKTD). The segment covering 168–177 (LRRKKSSRQP) has biased composition (basic residues). 2 positions are modified to phosphoserine: S183 and S185. The tract at residues 201–223 (ALLKRAMNIKENKAMLAQLLAEL) is MYC-binding. Glycyl lysine isopeptide (Lys-Gly) (interchain with G-Cter in SUMO2) cross-links involve residues K210 and K213. At S249 the chain carries Phosphoserine.

In terms of assembly, interacts with MYC. Interacts (via IBM motifs) with PSIP1 (via IBD domain); phosphorylation increases its affinity for PSIP1. In terms of processing, phosphorylation increases its interaction with PSIP1. Expressed in all tissues but not detected in total brain.

Its subcellular location is the cytoplasm. The protein localises to the nucleus. Plays a role in transcriptional regulation as a repressor that inhibits monoamine oxidase A (MAOA) activity and gene expression by binding to the promoter. Plays an important oncogenic role in mediating the full transforming effect of MYC in medulloblastoma cells. Involved in apoptotic signaling pathways; May act downstream of P38-kinase and BCL-2, but upstream of CASP3/caspase-3 as well as CCND1/cyclin D1 and E2F1. The chain is Cell division cycle-associated 7-like protein (Cdca7l) from Mus musculus (Mouse).